We begin with the raw amino-acid sequence, 339 residues long: Protein FAM76B (339 aa).

A2 is subject to N-acetylalanine. Phosphoserine occurs at positions 22 and 148. Residues E144–T243 form a disordered region. The segment covering S148–S160 has biased composition (low complexity). Over residues H167–I189 the composition is skewed to basic residues. Position 193 is a phosphoserine (S193). T215 bears the Phosphothreonine mark. Basic and acidic residues predominate over residues T215–S224. Polar residues predominate over residues N228–T243. Residues L248–K328 are a coiled coil.

Belongs to the FAM76 family. As to quaternary structure, interacts with HNRNPA2B1 (via C-terminus); the interaction results in retention of HNRNPA2B1 in the nucleus and inhibition of the NF-kappa-B-mediated inflammatory pathway.

It localises to the nucleus speckle. In terms of biological role, negatively regulates the NF-kappa-B-mediated inflammatory pathway by preventing the translocation of HNRNPA2B1 from the nucleus to the cytoplasm. Inhibits the PI3K/Akt/NF-kappa-B pathway-mediated polarization of M1 macrophages by binding to and stabilizing PIK3CD mRNA, resulting in increased levels of PIK3CD protein and increased levels of phosphorylated downstream target AKT which leads to decreased NF-kappa-B signaling. This is Protein FAM76B (FAM76B) from Homo sapiens (Human).